Reading from the N-terminus, the 231-residue chain is MAHPAQLGLQNATSPIMEELIAFHDHALMIIFLISSLVLYIISLMLTTKLTHTSTMNAQEIEMVWTILPAIILIMIALPSLRILYMTDEFNKPYLTLKAIGHQWYWSYEYSDYVDLAFDYYITPTYFLEPGEFRLLEVDNRTTLPMEADIRMLISSQDVLHSWAVPSLGVKTDAIPGRLNQAMLASMRPGLFYGQCSEICGSNHSFMPIVLEFIYFQDFEVWASYLYIVSL.

Over 1–14 (MAHPAQLGLQNATS) the chain is Mitochondrial intermembrane. Residues 15-45 (PIMEELIAFHDHALMIIFLISSLVLYIISLM) traverse the membrane as a helical segment. Over 46–59 (LTTKLTHTSTMNAQ) the chain is Mitochondrial matrix. The helical transmembrane segment at 60 to 87 (EIEMVWTILPAIILIMIALPSLRILYMT) threads the bilayer. Topologically, residues 88–231 (DEFNKPYLTL…WASYLYIVSL (144 aa)) are mitochondrial intermembrane. The Cu cation site is built by H161, C196, E198, C200, H204, and M207. E198 lines the Mg(2+) pocket.

Belongs to the cytochrome c oxidase subunit 2 family. Component of the cytochrome c oxidase (complex IV, CIV), a multisubunit enzyme composed of 14 subunits. The complex is composed of a catalytic core of 3 subunits MT-CO1, MT-CO2 and MT-CO3, encoded in the mitochondrial DNA, and 11 supernumerary subunits COX4I, COX5A, COX5B, COX6A, COX6B, COX6C, COX7A, COX7B, COX7C, COX8 and NDUFA4, which are encoded in the nuclear genome. The complex exists as a monomer or a dimer and forms supercomplexes (SCs) in the inner mitochondrial membrane with NADH-ubiquinone oxidoreductase (complex I, CI) and ubiquinol-cytochrome c oxidoreductase (cytochrome b-c1 complex, complex III, CIII), resulting in different assemblies (supercomplex SCI(1)III(2)IV(1) and megacomplex MCI(2)III(2)IV(2)). Found in a complex with TMEM177, COA6, COX18, COX20, SCO1 and SCO2. Interacts with TMEM177 in a COX20-dependent manner. Interacts with COX20. Interacts with COX16. It depends on Cu cation as a cofactor.

It localises to the mitochondrion inner membrane. The enzyme catalyses 4 Fe(II)-[cytochrome c] + O2 + 8 H(+)(in) = 4 Fe(III)-[cytochrome c] + 2 H2O + 4 H(+)(out). In terms of biological role, component of the cytochrome c oxidase, the last enzyme in the mitochondrial electron transport chain which drives oxidative phosphorylation. The respiratory chain contains 3 multisubunit complexes succinate dehydrogenase (complex II, CII), ubiquinol-cytochrome c oxidoreductase (cytochrome b-c1 complex, complex III, CIII) and cytochrome c oxidase (complex IV, CIV), that cooperate to transfer electrons derived from NADH and succinate to molecular oxygen, creating an electrochemical gradient over the inner membrane that drives transmembrane transport and the ATP synthase. Cytochrome c oxidase is the component of the respiratory chain that catalyzes the reduction of oxygen to water. Electrons originating from reduced cytochrome c in the intermembrane space (IMS) are transferred via the dinuclear copper A center (CU(A)) of subunit 2 and heme A of subunit 1 to the active site in subunit 1, a binuclear center (BNC) formed by heme A3 and copper B (CU(B)). The BNC reduces molecular oxygen to 2 water molecules using 4 electrons from cytochrome c in the IMS and 4 protons from the mitochondrial matrix. In Lagothrix lagotricha (Brown woolly monkey), this protein is Cytochrome c oxidase subunit 2 (MT-CO2).